Here is an 89-residue protein sequence, read N- to C-terminus: Small ribosomal subunit protein uS15 (89 aa).

It belongs to the universal ribosomal protein uS15 family. As to quaternary structure, part of the 30S ribosomal subunit. Forms a bridge to the 50S subunit in the 70S ribosome, contacting the 23S rRNA.

Its function is as follows. One of the primary rRNA binding proteins, it binds directly to 16S rRNA where it helps nucleate assembly of the platform of the 30S subunit by binding and bridging several RNA helices of the 16S rRNA. In terms of biological role, forms an intersubunit bridge (bridge B4) with the 23S rRNA of the 50S subunit in the ribosome. In Bifidobacterium animalis subsp. lactis (strain AD011), this protein is Small ribosomal subunit protein uS15.